We begin with the raw amino-acid sequence, 401 residues long: Probable cysteine desulfurase (401 aa).

Lys223 bears the N6-(pyridoxal phosphate)lysine mark.

The protein belongs to the class-V pyridoxal-phosphate-dependent aminotransferase family. Csd subfamily. Requires pyridoxal 5'-phosphate as cofactor.

The catalysed reaction is (sulfur carrier)-H + L-cysteine = (sulfur carrier)-SH + L-alanine. Catalyzes the removal of elemental sulfur and selenium atoms from L-cysteine, L-cystine, L-selenocysteine, and L-selenocystine to produce L-alanine. This chain is Probable cysteine desulfurase (csdA), found in Pseudomonas putida (strain ATCC 47054 / DSM 6125 / CFBP 8728 / NCIMB 11950 / KT2440).